The primary structure comprises 401 residues: Aspartokinase (401 aa).

It belongs to the aspartokinase family.

It carries out the reaction L-aspartate + ATP = 4-phospho-L-aspartate + ADP. Its pathway is amino-acid biosynthesis; L-lysine biosynthesis via DAP pathway; (S)-tetrahydrodipicolinate from L-aspartate: step 1/4. The protein operates within amino-acid biosynthesis; L-methionine biosynthesis via de novo pathway; L-homoserine from L-aspartate: step 1/3. It functions in the pathway amino-acid biosynthesis; L-threonine biosynthesis; L-threonine from L-aspartate: step 1/5. The chain is Aspartokinase (lysC) from Rickettsia felis (strain ATCC VR-1525 / URRWXCal2) (Rickettsia azadi).